Consider the following 441-residue polypeptide: MKKFFQEIKADIKFKSAGPGQKLTESVGEKAPKEKPSQPPVRQPRQGPTNEAQMAAAAALARLEQKQPRARGPTSQDSIRNQVRKELRAEAAVSGDPEAPGSNTAPEPKEEGSAHLAVPGVYFTCPLTGAILRKDQRDARIREAILMHFSTDPVAASIMKIHTFNKDRDRVKLGVDTIAKYLDNIHLHPEEEKYRKIKVQNKVFQERIHCLEGTHEFFEAIGFQKVLLPIPDQEGPEEFYVLSEAALAQPQSLEWHKEQLLSAEPVRATLARQRRVFRPSTLASQFDLPADFFNLTAEEIKREQRLRSEAVERLSVLRTKAMREREEQREMRKYTYTLLRVRLPDGCLLQGTFYARERVAALYGFVREALQNDWLPFELLASGGQKLSEDENLAFNECGLVPSALLTFSLDAAVLEDIRAAGTQPDTSILKPELLSAIEKL.

The segment at 1–10 (MKKFFQEIKA) is mediates interaction with LMAN1. Disordered stretches follow at residues 12–57 (IKFK…MAAA), 62–81 (RLEQKQPRARGPTSQDSIRN), and 86–113 (ELRAEAAVSGDPEAPGSNTAPEPKEEGS). Residues 27-36 (VGEKAPKEKP) show a composition bias toward basic and acidic residues. Residues 51 to 63 (EAQMAAAAALARL) form a VCP/p97-interacting motif (VIM) region. The PUB domain occupies 175-244 (VDTIAKYLDN…GPEEFYVLSE (70 aa)). The region spanning 332–408 (RKYTYTLLRV…GLVPSALLTF (77 aa)) is the UBX domain.

In terms of assembly, interacts with VCP through the PUB domain (via C-terminus) and VIM motif (via N-terminus); the interaction is direct. Forms a ternary complex with CAV1 and VCP. Interacts with SYVN1. Interacts with HERPUD1. Interacts with VCPKMT. May interact with DERL1. Interacts with PLAA, VCP and YOD1; may form a complex involved in macroautophagy. Interacts with LMAN1.

The protein resides in the cytoplasm. It localises to the cytosol. Its subcellular location is the membrane. The protein localises to the nucleus. It is found in the cytoskeleton. The protein resides in the microtubule organizing center. It localises to the centrosome. Its subcellular location is the early endosome membrane. The protein localises to the late endosome membrane. It is found in the lysosome membrane. Functionally, may negatively regulate the ATPase activity of VCP, an ATP-driven segregase that associates with different cofactors to control a wide variety of cellular processes. As a cofactor of VCP, it may play a role in the transport of CAV1 to lysosomes for degradation. It may also play a role in endoplasmic reticulum-associated degradation (ERAD) of misfolded proteins. Together with VCP and other cofactors, it may play a role in macroautophagy, regulating for instance the clearance of damaged lysosomes. The protein is UBX domain-containing protein 6 of Bos taurus (Bovine).